The following is a 189-amino-acid chain: uncharacterized protein (189 aa).

4 helical membrane-spanning segments follow: residues 49-69 (LLGILKLITFPVLCAAGLFVF), 78-98 (LFHKSFQGCSGYVLATFLSLF), 102-122 (LTIVGIVSCITWAPGFIFPMI), and 124-144 (VSIAFATVETCFQIYTHLFPA). The tract at residues 165–189 (SSSAPDLNYPSLPTQSASPSQRFSA) is disordered.

Belongs to the chlamydial CPn_0442/CT_006/TC_0274 family.

Its subcellular location is the cell membrane. This is an uncharacterized protein from Chlamydia trachomatis serovar D (strain ATCC VR-885 / DSM 19411 / UW-3/Cx).